Consider the following 396-residue polypeptide: Ribosomal RNA large subunit methyltransferase I (396 aa).

Residues 2–81 (SVRLVLTKGR…ETIDIAFFTR (80 aa)) form the PUA domain.

The protein belongs to the methyltransferase superfamily. RlmI family.

The protein localises to the cytoplasm. The catalysed reaction is cytidine(1962) in 23S rRNA + S-adenosyl-L-methionine = 5-methylcytidine(1962) in 23S rRNA + S-adenosyl-L-homocysteine + H(+). Specifically methylates the cytosine at position 1962 (m5C1962) of 23S rRNA. The protein is Ribosomal RNA large subunit methyltransferase I of Enterobacter sp. (strain 638).